We begin with the raw amino-acid sequence, 495 residues long: NADH-ubiquinone oxidoreductase chain 4 (495 aa).

11 helical membrane-spanning segments follow: residues 9–29 (YSNL…PLFI), 39–59 (LIGL…RIQF), 89–109 (ISLF…SVGW), 139–159 (LLLF…IIGV), 173–193 (FFLY…LILF), 214–234 (IFLW…VPVH), 272–292 (FPEA…IAII), 313–333 (VAHM…GIGG), 335–355 (ILPM…VGVL), 367–387 (YGGL…FTLA), and 413–433 (LVAT…LWLY).

The protein belongs to the complex I subunit 4 family.

It is found in the mitochondrion membrane. It catalyses the reaction a ubiquinone + NADH + 5 H(+)(in) = a ubiquinol + NAD(+) + 4 H(+)(out). Its function is as follows. Core subunit of the mitochondrial membrane respiratory chain NADH dehydrogenase (Complex I) that is believed to belong to the minimal assembly required for catalysis. Complex I functions in the transfer of electrons from NADH to the respiratory chain. The immediate electron acceptor for the enzyme is believed to be ubiquinone. This is NADH-ubiquinone oxidoreductase chain 4 (ND4) from Brassica campestris (Field mustard).